A 560-amino-acid chain; its full sequence is Nuclear receptor subfamily 5 group A member 2 (560 aa).

Residues 17 to 54 are disordered; sequence GLPAIAPAPGSETPHSPKLEEKHREKRAGLPDRHRRPI. Residues 31 to 48 are compositionally biased toward basic and acidic residues; sequence HSPKLEEKHREKRAGLPD. Residues 104-179 constitute a DNA-binding region (nuclear receptor); sequence EELCPVCGDK…VGMKLEAVRA (76 aa). Zn(2+) contacts are provided by cysteine 107, cysteine 110, cysteine 124, cysteine 127, cysteine 143, cysteine 149, cysteine 159, and cysteine 162. 2 NR C4-type zinc fingers span residues 107-127 and 143-162; these read CPVC…CESC and CIEN…CPYC. The tract at residues 173-188 is C-terminal extension (CTE); it reads KLEAVRADRMRGGRNK. The FTZ-F1 box signature appears at 189–208; it reads FGPMYKRDRALKQQKKALIR. Lysine 289 is covalently cross-linked (Glycyl lysine isopeptide (Lys-Gly) (interchain with G-Cter in SUMO1)). Residues 319–558 enclose the NR LBD domain; sequence SIPHLILELL…NLLIEMLHAK (240 aa). A phospholipid derivative is bound by residues tyrosine 535 and lysine 539. The interval 547–558 is AF-2; that stretch reads YNNLLIEMLHAK.

This sequence belongs to the nuclear hormone receptor family. NR5 subfamily. In terms of assembly, monomer; Binds DNA as a monomer. Interacts with nuclear receptor corepressors NR0B1 and NR0B2; repressing NR5A2 nuclear receptor activity. Interacts with nuclear receptor coactivators CTNNB1, PPARGC1A and NCOA2; interaction takes place following ligand-binding and promotes target gene activation. Interacts (when sumoylated) with GPS2; interaction with GPS2 onto hepatic acute phase protein promoters prevents N-Cor corepressor complex dissociation. Interacts with HNF1A. Interacts with GRIP1. In terms of processing, sumoylated by SUMO1 at Lys-289 during the hepatic acute phase response, leading to promote interaction with GPS2 and prevent N-Cor corepressor complex dissociation.

It localises to the nucleus. Its subcellular location is the chromosome. In terms of biological role, orphan nuclear receptor that binds DNA as a monomer to the 5'-TCAAGGCCA-3' sequence and controls expression of target genes: regulates key biological processes, such as early embryonic development, cholesterol and bile acid synthesis pathways, as well as liver and pancreas morphogenesis. Ligand-binding causes conformational change which causes recruitment of coactivators, promoting target gene activation. The specific ligand is unknown, but specific phospholipids, such as phosphatidylethanolamine, phosphatidylserine, dilauroyl phosphatidylcholine and diundecanoyl phosphatidylcholine can act as ligand in vitro. Acts as a pioneer transcription factor, which unwraps target DNA from histones and elicits local opening of closed chromatin. Plays a central role during preimplantation stages of embryonic development. Plays a minor role in zygotic genome activation (ZGA) by regulating a small set of two-cell stage genes. Plays a major role in morula development (2-16 cells embryos) by acting as a master regulator at the 8-cell stage, controlling expression of lineage-specifying transcription factors and genes involved in mitosis, telomere maintenance and DNA repair. Zygotic NR5A2 binds to both closed and open chromatin with other transcription factors, often at SINE B1/Alu repeats DNA elements, promoting chromatin accessibility at nearby regulatory regions. Also involved in the epiblast stage of development and embryonic stem cell pluripotency, by promoting expression of POU5F1/OCT4. Regulates other processes later in development, such as formation of connective tissue in lower jaw and middle ear, neural stem cell differentiation, ovarian follicle development and Sertoli cell differentiation. Involved in exocrine pancreas development and acinar cell differentiation. Acts as an essential transcriptional regulator of lipid metabolism. Key regulator of cholesterol 7-alpha-hydroxylase gene (CYP7A) expression in liver. Also acts as a negative regulator of inflammation in different organs, such as, liver and pancreas. Protects against intestinal inflammation via its ability to regulate glucocorticoid production. Plays an anti-inflammatory role during the hepatic acute phase response by acting as a corepressor: inhibits the hepatic acute phase response by preventing dissociation of the N-Cor corepressor complex. Acts as a regulator of immunity by promoting lymphocyte T-cell development, proliferation and effector functions. Also involved in resolution of endoplasmic reticulum stress in the liver. The sequence is that of Nuclear receptor subfamily 5 group A member 2 from Rattus norvegicus (Rat).